The chain runs to 70 residues: Small ribosomal subunit protein bS21B (70 aa).

It belongs to the bacterial ribosomal protein bS21 family.

This Paraburkholderia xenovorans (strain LB400) protein is Small ribosomal subunit protein bS21B.